A 604-amino-acid chain; its full sequence is Elongation factor 4 (604 aa).

A tr-type G domain is found at 7–189; it reads KNIRNFCIIA…QIVTKIPAPS (183 aa). Residues 19–24 and 136–139 each bind GTP; these read DHGKST and NKID.

The protein belongs to the TRAFAC class translation factor GTPase superfamily. Classic translation factor GTPase family. LepA subfamily.

Its subcellular location is the cell membrane. It carries out the reaction GTP + H2O = GDP + phosphate + H(+). Its function is as follows. Required for accurate and efficient protein synthesis under certain stress conditions. May act as a fidelity factor of the translation reaction, by catalyzing a one-codon backward translocation of tRNAs on improperly translocated ribosomes. Back-translocation proceeds from a post-translocation (POST) complex to a pre-translocation (PRE) complex, thus giving elongation factor G a second chance to translocate the tRNAs correctly. Binds to ribosomes in a GTP-dependent manner. The protein is Elongation factor 4 of Lachnospira eligens (strain ATCC 27750 / DSM 3376 / VPI C15-48 / C15-B4) (Eubacterium eligens).